The primary structure comprises 307 residues: Protoheme IX farnesyltransferase (307 aa).

8 consecutive transmembrane segments (helical) span residues 32-52 (MGIV…ALHF), 65-85 (FFTI…NNYI), 108-128 (PGFA…FLLL), 131-151 (PMAV…YSLW), 158-178 (LNTV…WAAI), 186-206 (IAWM…LALA), 251-271 (LGIT…VLGF), and 287-307 (FVYS…VTFF).

It belongs to the UbiA prenyltransferase family. Protoheme IX farnesyltransferase subfamily. As to quaternary structure, interacts with CtaA.

The protein localises to the cell membrane. The enzyme catalyses heme b + (2E,6E)-farnesyl diphosphate + H2O = Fe(II)-heme o + diphosphate. The protein operates within porphyrin-containing compound metabolism; heme O biosynthesis; heme O from protoheme: step 1/1. Converts heme B (protoheme IX) to heme O by substitution of the vinyl group on carbon 2 of heme B porphyrin ring with a hydroxyethyl farnesyl side group. The sequence is that of Protoheme IX farnesyltransferase from Bacillus anthracis (strain A0248).